The following is a 152-amino-acid chain: Complexin (152 aa).

The interval 1 to 119 (MAAFIAKQMV…EEEDDDEFAK (119 aa)) is disordered. A compositionally biased stretch (acidic residues) spans 23 to 39 (DEGEKEGNENAEEEAAA). Composition is skewed to basic and acidic residues over residues 41–82 (EEAR…VKEE) and 90–104 (DEGR…KEEL). Residues 59-75 (EEEREEMRQTIRDKYGL) form an interaction with the SNARE complex region. Cysteine methyl ester is present on C149. A lipid anchor (S-farnesyl cysteine) is attached at C149. Positions 150 to 152 (SLQ) are cleaved as a propeptide — removed in mature form.

Belongs to the complexin/synaphin family. In terms of assembly, binds to the SNARE core complex containing SNAP25, synaptobrevin and syntaxin-1.

It localises to the membrane. The protein localises to the cytoplasm. The protein resides in the cytosol. Positively regulates a late step in synaptic vesicle exocytosis. The protein is Complexin (cpx) of Doryteuthis pealeii (Longfin inshore squid).